The sequence spans 255 residues: Proteasome subunit alpha 2 (255 aa).

Positions 229–255 are disordered; the sequence is AGSSLEEMLPTPAATEDAPPANGDAPS. The segment covering 238–249 has biased composition (low complexity); it reads PTPAATEDAPPA.

This sequence belongs to the peptidase T1A family. The 20S proteasome core is composed of 14 alpha and 14 beta subunits that assemble into four stacked heptameric rings, resulting in a barrel-shaped structure. The two inner rings, each composed of seven catalytic beta subunits, are sandwiched by two outer rings, each composed of seven alpha subunits. All four combinations of alpha- and beta-subunits (beta2-alpha1, beta2-alpha2, beta1-alpha2 and beta1-alpha1) yield fully assembled and proteolytically active proteasomes. The catalytic chamber with the active sites is on the inside of the barrel. Has probably a gated structure, the ends of the cylinder being occluded by the N-termini of the alpha-subunits. Is likely capped by the proteasome-associated ATPase, ARC. Post-translationally, the N-terminus is blocked.

The protein resides in the cytoplasm. It participates in protein degradation; proteasomal Pup-dependent pathway. Its activity is regulated as follows. The formation of the proteasomal ATPase ARC-20S proteasome complex, likely via the docking of the C-termini of ARC into the intersubunit pockets in the alpha-rings, may trigger opening of the gate for substrate entry. Interconversion between the open-gate and close-gate conformations leads to a dynamic regulation of the 20S proteasome proteolysis activity. In terms of biological role, component of the proteasome core, a large protease complex with broad specificity involved in protein degradation. The R.erythropolis proteasomes are able to cleave oligopeptides after Tyr, Phe and Leu, very poorly after Arg but not after Glu. Thus, displays chymotrypsin-like activity, low trypsin-like activity but no caspase-like activity. This Rhodococcus erythropolis (Arthrobacter picolinophilus) protein is Proteasome subunit alpha 2.